The primary structure comprises 89 residues: Small ribosomal subunit protein uS15 (89 aa).

The protein belongs to the universal ribosomal protein uS15 family. In terms of assembly, part of the 30S ribosomal subunit. Forms a bridge to the 50S subunit in the 70S ribosome, contacting the 23S rRNA.

One of the primary rRNA binding proteins, it binds directly to 16S rRNA where it helps nucleate assembly of the platform of the 30S subunit by binding and bridging several RNA helices of the 16S rRNA. Its function is as follows. Forms an intersubunit bridge (bridge B4) with the 23S rRNA of the 50S subunit in the ribosome. In Frankia alni (strain DSM 45986 / CECT 9034 / ACN14a), this protein is Small ribosomal subunit protein uS15.